The primary structure comprises 87 residues: Alpha-toxin To2 (87 aa).

Residues Met1 to Cys20 form the signal peptide. The 63-residue stretch at Lys22–Gly84 folds into the LCN-type CS-alpha/beta domain. Intrachain disulfides connect Cys32–Cys83, Cys36–Cys58, Cys44–Cys64, and Cys48–Cys66. Lys85 carries the post-translational modification Lysine amide.

Expressed by the venom gland.

Its subcellular location is the secreted. Its function is as follows. Alpha toxins bind voltage-independently at site-3 of sodium channels (Nav) and inhibit the inactivation of the activated channels, thereby blocking neuronal transmission. Affects the tetrodotoxin-sensitive sodium current permeability of F-11 rat neuroblastoma cells. Produces a dose dependent increase in amplitude and duration of the current. In Tityus obscurus (Amazonian scorpion), this protein is Alpha-toxin To2.